Reading from the N-terminus, the 1069-residue chain is Calcium-transporting ATPase 10, plasma membrane-type (1069 aa).

The disordered stretch occupies residues 1 to 29 (MSGQFNNSPRGEDKDVEAGTSSFTEYEDS). Ser-2 is modified (N-acetylserine). Residues 2-180 (SGQFNNSPRG…NTYPQKKGRS (179 aa)) lie on the Cytoplasmic side of the membrane. Residues 42 to 53 (ERLRRWRQAALV) form an interaction with calmodulin region. The helical transmembrane segment at 181-201 (FWRFVWEASQDLTLIILIVAA) threads the bilayer. Over 202 to 219 (VASLALGIKTEGIEKGWY) the chain is Lumenal. Residues 220 to 240 (DGISIAFAVLLVIVVTATSDY) form a helical membrane-spanning segment. Residues 241 to 369 (RQSLQFQNLN…GGETPLQVRL (129 aa)) lie on the Cytoplasmic side of the membrane. The helical transmembrane segment at 370-389 (NGVATFIGIVGLTVAGVVLF) threads the bilayer. The Lumenal segment spans residues 390–426 (VLVVRYFTGHTKNEQGGPQFIGGKTKFEHVLDDLVEI). Residues 427 to 444 (FTVAVTIVVVAVPEGLPL) traverse the membrane as a helical segment. Residues 445–844 (AVTLTLAYSM…RWGRSVYANI (400 aa)) are Cytoplasmic-facing. The 4-aspartylphosphate intermediate role is filled by Asp-482. Mg(2+)-binding residues include Asp-789 and Asp-793. Residues 845–863 (QKFIQFQLTVNVAALVINV) traverse the membrane as a helical segment. Over 864 to 874 (VAAISAGEVPL) the chain is Lumenal. Residues 875-895 (TAVQLLWVNLIMDTLGALALA) traverse the membrane as a helical segment. The Cytoplasmic portion of the chain corresponds to 896-915 (TEPPTDHLMDRAPVGRREPL). Residues 916–938 (ITNIMWRNLFIQAMYQVTVLLIL) traverse the membrane as a helical segment. The Lumenal segment spans residues 939–951 (NFRGISILHLKSK). A helical membrane pass occupies residues 952-973 (PNAERVKNTVIFNAFVICQVFN). Over 974–991 (EFNARKPDEINIFRGVLR) the chain is Cytoplasmic. The chain crosses the membrane as a helical span at residues 992–1013 (NHLFVGIISITIVLQVVIVEFL). The Lumenal portion of the chain corresponds to 1014–1023 (GTFASTTKLD). The chain crosses the membrane as a helical span at residues 1024–1045 (WEMWLVCIGIGSISWPLAVIGK). Residues 1046-1069 (LIPVPETPVSQYFRINRWRRNSSG) are Cytoplasmic-facing.

This sequence belongs to the cation transport ATPase (P-type) (TC 3.A.3) family. Type IIB subfamily.

Its subcellular location is the membrane. The catalysed reaction is Ca(2+)(in) + ATP + H2O = Ca(2+)(out) + ADP + phosphate + H(+). With respect to regulation, activated by calmodulin. In terms of biological role, this magnesium-dependent enzyme catalyzes the hydrolysis of ATP coupled with the translocation of calcium from the cytosol into the endoplasmic reticulum. In Arabidopsis thaliana (Mouse-ear cress), this protein is Calcium-transporting ATPase 10, plasma membrane-type (ACA10).